We begin with the raw amino-acid sequence, 298 residues long: Leucine-rich repeat-containing protein 38 (298 aa).

A signal peptide spans 1–31 (MSLCVAPRHPTGAAAALGLGSLLVLLGPGRA). 2 cysteine pairs are disulfide-bonded: C32/C38 and C36/C46. The 29-residue stretch at 32–60 (CPAGCACTDPHTVDCRDRGLPSVPDPFPL) folds into the LRRNT domain. Over 32–251 (CPAGCACTDP…ECKFSLSLTD (220 aa)) the chain is Extracellular. 5 LRR repeats span residues 61–82 (DVRK…FFIF), 85–106 (DLVY…TFSG), 109–130 (KLAF…AFRS), 133–154 (RLVK…AFES), and 157–177 (SLQV…AALD). N119 carries N-linked (GlcNAc...) asparagine glycosylation. The LRRCT domain occupies 190–245 (NPWLCDCDFAHLFSWIQENTSKLPKGLDAIQCSLPMEDRRVALRELSEASFSECKF). Cystine bridges form between C194–C221 and C196–C243. Residues 252–272 (LFIIIFSGVAVSIAAIISSFF) traverse the membrane as a helical segment. The Cytoplasmic portion of the chain corresponds to 273 to 298 (LATVVQCFQRCAPNKDTEDEDDDEDD).

Interacts with KCNMA1.

The protein resides in the cell membrane. In terms of biological role, auxiliary protein of the large-conductance, voltage and calcium-activated potassium channel (BK alpha). Modulates gating properties by producing a marked shift in the BK channel's voltage dependence of activation in the hyperpolarizing direction, and in the absence of calcium. In Mus musculus (Mouse), this protein is Leucine-rich repeat-containing protein 38 (Lrrc38).